A 280-amino-acid polypeptide reads, in one-letter code: uncharacterized protein (280 aa).

Disordered regions lie at residues 20–41 (DVKK…QQQQ), 170–199 (INSP…KDKA), and 251–280 (GNSK…SFSF). A compositionally biased stretch (low complexity) spans 25 to 41 (QQQQQQQPQAPPQQQQQ). The span at 178–199 (EEEKPQLSKKEEPEWLKGKDKA) shows a compositional bias: basic and acidic residues.

This is an uncharacterized protein from Dictyostelium discoideum (Social amoeba).